A 318-amino-acid chain; its full sequence is Dual specificity protein phosphatase 2 (318 aa).

The Rhodanese domain maps to 27-148; the sequence is EAERTLLLDC…FQTYCPDLCS (122 aa). Positions 176-317 constitute a Tyrosine-protein phosphatase domain; it reads GPVEILPYLY…LLQLETQVLC (142 aa). The active-site Phosphocysteine intermediate is the Cys-261.

The protein belongs to the protein-tyrosine phosphatase family. Non-receptor class dual specificity subfamily. Interacts with MAPK14; this interaction does not lead to catalytic activation of DUSP2 and dephosphrylation of MAPK14. In hematopoietic tissues such as spleen and thymus.

Its subcellular location is the nucleus. It catalyses the reaction O-phospho-L-tyrosyl-[protein] + H2O = L-tyrosyl-[protein] + phosphate. It carries out the reaction O-phospho-L-threonyl-[protein] + H2O = L-threonyl-[protein] + phosphate. In terms of biological role, dephosphorylates both phosphorylated Thr and Tyr residues in MAPK1, and dephosphorylation of phosphotyrosine is slightly faster than that of phosphothreonine. Can dephosphorylate MAPK1. The polypeptide is Dual specificity protein phosphatase 2 (Mus musculus (Mouse)).